Consider the following 256-residue polypeptide: 1-(5-phosphoribosyl)-5-[(5-phosphoribosylamino)methylideneamino] imidazole-4-carboxamide isomerase (256 aa).

The active-site Proton acceptor is Asp8. The active-site Proton donor is the Asp129.

It belongs to the HisA/HisF family.

It localises to the cytoplasm. The catalysed reaction is 1-(5-phospho-beta-D-ribosyl)-5-[(5-phospho-beta-D-ribosylamino)methylideneamino]imidazole-4-carboxamide = 5-[(5-phospho-1-deoxy-D-ribulos-1-ylimino)methylamino]-1-(5-phospho-beta-D-ribosyl)imidazole-4-carboxamide. Its pathway is amino-acid biosynthesis; L-histidine biosynthesis; L-histidine from 5-phospho-alpha-D-ribose 1-diphosphate: step 4/9. This chain is 1-(5-phosphoribosyl)-5-[(5-phosphoribosylamino)methylideneamino] imidazole-4-carboxamide isomerase, found in Prochlorococcus marinus (strain NATL1A).